The sequence spans 328 residues: UPF0194 membrane protein YE2891 (328 aa).

A signal peptide spans 1–22 (MNRKKIIVAVVIVALLAAIGYG). Coiled coils occupy residues 80–109 (YVNA…REEE) and 139–208 (ANKA…TTLL).

The protein belongs to the UPF0194 family.

The protein resides in the periplasm. This chain is UPF0194 membrane protein YE2891, found in Yersinia enterocolitica serotype O:8 / biotype 1B (strain NCTC 13174 / 8081).